The chain runs to 379 residues: MNGSVGIVETKKVTFPEITLECGEKIAPVTVAYETYGELNERGDNAILILHALTGDAHVAGKHRPEDKVAGWWDPMVGPGRPFDTNKYFIVCSNVLGGCYGTTGPSSINPATGRPWGMSFPIITIRDMVNLQYKLVRHLGITKILAAVGGSMGGMQALEWAYMYPEMLKSVVAIATSARLSPFGIAFNAVGREAIMTDPEWRGGNYYGFEGPKRGLALARMIGIITYKSDISWQYRFGRTHTYETDQELFSHTSRFEIENYLYYQGDKLVKRFDANTYLYLLKAMDLHDISRGRGRYREILKELKTPLLAIGIDTDFLYPTYQQKEIVEALKEAKKEAYYWELSSPHGHDAFLIEFSKMAPILSNFLEYVAGRRATINF.

The AB hydrolase-1 domain occupies 45 to 355 (NAILILHALT…PHGHDAFLIE (311 aa)). S151 functions as the Nucleophile in the catalytic mechanism. R220 contacts substrate. Residues D316 and H349 contribute to the active site. D350 contacts substrate.

Belongs to the AB hydrolase superfamily. MetX family. In terms of assembly, homodimer.

The protein resides in the cytoplasm. It catalyses the reaction L-homoserine + acetyl-CoA = O-acetyl-L-homoserine + CoA. It functions in the pathway amino-acid biosynthesis; L-methionine biosynthesis via de novo pathway; O-acetyl-L-homoserine from L-homoserine: step 1/1. Its function is as follows. Transfers an acetyl group from acetyl-CoA to L-homoserine, forming acetyl-L-homoserine. The sequence is that of Homoserine O-acetyltransferase from Carboxydothermus hydrogenoformans (strain ATCC BAA-161 / DSM 6008 / Z-2901).